A 416-amino-acid polypeptide reads, in one-letter code: Na(+)/H(+) antiporter NhaA (416 aa).

9 consecutive transmembrane segments (helical) span residues V18–W38, L59–L79, A97–I117, G127–G147, L167–L187, G265–F285, V297–I317, M333–L353, and L363–L383. Residues A396–R416 are disordered.

The protein belongs to the NhaA Na(+)/H(+) (TC 2.A.33) antiporter family.

Its subcellular location is the cell membrane. The catalysed reaction is Na(+)(in) + 2 H(+)(out) = Na(+)(out) + 2 H(+)(in). Functionally, na(+)/H(+) antiporter that extrudes sodium in exchange for external protons. The sequence is that of Na(+)/H(+) antiporter NhaA from Nocardia farcinica (strain IFM 10152).